The sequence spans 65 residues: Large ribosomal subunit protein bL32 (65 aa).

Belongs to the bacterial ribosomal protein bL32 family.

This is Large ribosomal subunit protein bL32 from Tropheryma whipplei (strain TW08/27) (Whipple's bacillus).